A 426-amino-acid chain; its full sequence is Putative phosphate permease CT_962 (426 aa).

11 helical membrane passes run 1 to 21 (MWLL…NIGA), 37 to 57 (LTLK…AVLL), 83 to 103 (VFGM…ASFC), 104 to 124 (GWPV…GIIL), 140 to 160 (VSWL…FSFI), 183 to 203 (AIII…APVI), 207 to 227 (PALR…IWGI), 260 to 280 (LIVE…MSFA), 309 to 329 (VLLV…ATWG), 365 to 385 (LGFP…IGFA), and 399 to 419 (IVLS…VFFL).

This sequence belongs to the inorganic phosphate transporter (PiT) (TC 2.A.20) family.

Its subcellular location is the cell membrane. Potential transporter for phosphate. The sequence is that of Putative phosphate permease CT_962 from Chlamydia trachomatis serovar D (strain ATCC VR-885 / DSM 19411 / UW-3/Cx).